A 229-amino-acid polypeptide reads, in one-letter code: MLSRLGARALVCLAGVAMLAASGCALMPREPLVQMPTTARAEPRPIGPASGSIFQSSYAGNPLFEDRRPRNVGDILTILITENVNASKNSGTNTSRTGNAALAFDSVPRALGGLFGTSQNANINGANTMKASGGASAANTFNGTITVTVLEVLANGNLVVSGEKQMAINQGAEFIRFSGVVNPRTITGDNAVLSTQVADARIEYTAKGVIDEAQNMGWLQRFFLNVSPF.

The signal sequence occupies residues 1 to 23; it reads MLSRLGARALVCLAGVAMLAASG. Cysteine 24 carries N-palmitoyl cysteine lipidation. Residue cysteine 24 is the site of S-diacylglycerol cysteine attachment.

It belongs to the FlgH family. As to quaternary structure, the basal body constitutes a major portion of the flagellar organelle and consists of four rings (L,P,S, and M) mounted on a central rod.

It is found in the cell outer membrane. It localises to the bacterial flagellum basal body. Functionally, assembles around the rod to form the L-ring and probably protects the motor/basal body from shearing forces during rotation. The polypeptide is Flagellar L-ring protein (Cupriavidus taiwanensis (strain DSM 17343 / BCRC 17206 / CCUG 44338 / CIP 107171 / LMG 19424 / R1) (Ralstonia taiwanensis (strain LMG 19424))).